The chain runs to 75 residues: Exodeoxyribonuclease 7 small subunit (75 aa).

It belongs to the XseB family. Heterooligomer composed of large and small subunits.

It is found in the cytoplasm. It catalyses the reaction Exonucleolytic cleavage in either 5'- to 3'- or 3'- to 5'-direction to yield nucleoside 5'-phosphates.. Bidirectionally degrades single-stranded DNA into large acid-insoluble oligonucleotides, which are then degraded further into small acid-soluble oligonucleotides. In Thermoanaerobacter sp. (strain X514), this protein is Exodeoxyribonuclease 7 small subunit.